Here is a 346-residue protein sequence, read N- to C-terminus: N-acetyl-gamma-glutamyl-phosphate reductase (346 aa).

Cys150 is an active-site residue.

Belongs to the NAGSA dehydrogenase family. Type 1 subfamily.

It is found in the cytoplasm. The enzyme catalyses N-acetyl-L-glutamate 5-semialdehyde + phosphate + NADP(+) = N-acetyl-L-glutamyl 5-phosphate + NADPH + H(+). It participates in amino-acid biosynthesis; L-arginine biosynthesis; N(2)-acetyl-L-ornithine from L-glutamate: step 3/4. Functionally, catalyzes the NADPH-dependent reduction of N-acetyl-5-glutamyl phosphate to yield N-acetyl-L-glutamate 5-semialdehyde. The polypeptide is N-acetyl-gamma-glutamyl-phosphate reductase (Alkaliphilus metalliredigens (strain QYMF)).